Here is a 491-residue protein sequence, read N- to C-terminus: La-related protein 6 (491 aa).

Positions 1–87 are disordered; the sequence is MAQSGGEARP…REDLEQEWKP (87 aa). Alanine 2 carries the N-acetylalanine modification. The segment covering 24–37 has biased composition (acidic residues); the sequence is EAEDVDELEDEEEG. Serine 56 and serine 58 each carry phosphoserine. Residues 86–177 enclose the HTH La-type RNA-binding domain; that stretch reads KPPDEELIKK…RRTTPVPLFP (92 aa). In terms of domain architecture, RRM spans 184–296; that stretch reads KMLLVYDLYL…KAVLIGMKPP (113 aa). Positions 186–193 match the Nuclear export signal motif; the sequence is LLVYDLYL. Disordered stretches follow at residues 293-403 and 423-491; these read MKPP…EEGR and SSVT…RACV. Positions 296-302 match the Nuclear localization signal motif; sequence PKKKPAK. Residues 332 to 346 are compositionally biased toward low complexity; that stretch reads DESSANSSSDPESNP. 2 stretches are compositionally biased toward polar residues: residues 359–386 and 444–453; these read NKLS…SSPL and QEKSPGTSPL. One can recognise an SUZ-C domain in the interval 427–485; the sequence is PSGSPWVRRRRQAEMGTQEKSPGTSPLLSRKMQTADGLPVGVLRLPRGPDNTRGFHGHE. Over residues 482-491 the composition is skewed to basic and acidic residues; it reads HGHERSRACV.

In terms of assembly, interacts (via the HTH domain) with VIM/vimentin. Interacts (via C-terminus) with non-muscle myosin MYH10. Interacts (via C-terminus) with DHX9. As to expression, expressed in numerous tissues.

It is found in the cytoplasm. It localises to the nucleus. Functionally, regulates the coordinated translation of type I collagen alpha-1 and alpha-2 mRNAs, CO1A1 and CO1A2. Stabilizes mRNAs through high-affinity binding of a stem-loop structure in their 5' UTR. This regulation requires VIM and MYH10 filaments, and the helicase DHX9. This Homo sapiens (Human) protein is La-related protein 6 (LARP6).